Reading from the N-terminus, the 69-residue chain is Antimicrobial peptide ISAMP (69 aa).

The N-terminal stretch at 1–23 is a signal peptide; that stretch reads MRAVAIFIVTLLVLECVYFVMSE.

As to expression, expressed in the fat body, hemocytes and salivary glands of partially-fed female ticks. Not expressed in the midgut.

It is found in the secreted. Its function is as follows. Has antimicrobial activity against B.cereus (MIC=5.8 ug/ml), B.subtilis (MIC=12.3 ug/ml), S.aureus (MIC=10.4 ug/ml), E.coli Edl 933 (MIC=3.2 ug/ml) and E.coli MG/655 (MIC=4.2 ug/ml). Non-hemolytic. This chain is Antimicrobial peptide ISAMP, found in Ixodes scapularis (Black-legged tick).